Consider the following 420-residue polypeptide: Serine protease inhibitor A3B (420 aa).

Positions 1–17 (MAFIAALGLLMAEICPA) are cleaved as a signal peptide. N-linked (GlcNAc...) asparagine glycosylation is found at N104 and N349. Positions 367 to 392 (GTEGDAITIVGYNFMSAKLKPVFVKF) are RCL.

This sequence belongs to the serpin family.

The protein localises to the secreted. This Mus musculus (Mouse) protein is Serine protease inhibitor A3B (Serpina3b).